The following is a 240-amino-acid chain: Membrane-spanning 4-domains subfamily A member 7 (240 aa).

At 1–47 the chain is on the cytoplasmic side; it reads MLLQSQTMGVSHSFTPKGITIPQREKPGHMYQNEDYLQNGLPTETTV. The chain crosses the membrane as a helical span at residues 48 to 68; it reads LGTVQILCCLLISSLGAILVF. At 69–83 the chain is on the extracellular side; that stretch reads APYPSHFNPAISTTL. Residues 84-104 traverse the membrane as a helical segment; that stretch reads MSGYPFLGALCFGITGSLSII. At 105-121 the chain is on the cytoplasmic side; it reads SGKQSTKPFDLSSLTSN. Residues 122–142 traverse the membrane as a helical segment; it reads AVSSVTAGAGLFLLADSMVAL. At 143-178 the chain is on the extracellular side; that stretch reads RTASQHCGSEMDYLSSLPYSEYYYPIYEIKDCLLTS. Residues 179–199 traverse the membrane as a helical segment; that stretch reads VSLTGVLVVMLIFTVLELLLA. Residues 200-240 are Cytoplasmic-facing; the sequence is AYSSVFWWKQLYSNNPGSSFSSTQSQDHIQQVKKSSSRSWI. Residues 218–240 are disordered; it reads SFSSTQSQDHIQQVKKSSSRSWI.

It belongs to the MS4A family. In terms of tissue distribution, ubiquitous expression in normal tissues. Expression is more elevated in adult liver, lung, spleen, and heart than in their fetal counterparts, and is higher in normal tissues than in the cancerous tissue or cell lines. Low levels of expression were detected in the promonocytic stage, whereas high levels of expression were detected in mature monocytes.

It is found in the membrane. Functionally, may be involved in signal transduction as a component of a multimeric receptor complex. The sequence is that of Membrane-spanning 4-domains subfamily A member 7 (MS4A7) from Homo sapiens (Human).